Reading from the N-terminus, the 199-residue chain is Probable GTP-binding protein EngB (199 aa).

Residues 22–195 (QLPEIALSGR…WEWIEQQCDI (174 aa)) enclose the EngB-type G domain. GTP-binding positions include 30 to 37 (GRSNVGKS), 57 to 61 (GKTQT), 75 to 78 (DVPG), 142 to 145 (TKMD), and 174 to 176 (FSA). Residues serine 37 and threonine 59 each contribute to the Mg(2+) site.

This sequence belongs to the TRAFAC class TrmE-Era-EngA-EngB-Septin-like GTPase superfamily. EngB GTPase family. Mg(2+) is required as a cofactor.

Functionally, necessary for normal cell division and for the maintenance of normal septation. This chain is Probable GTP-binding protein EngB, found in Latilactobacillus sakei subsp. sakei (strain 23K) (Lactobacillus sakei subsp. sakei).